Here is a 171-residue protein sequence, read N- to C-terminus: Plastocyanin minor isoform, chloroplastic (171 aa).

Residues 73-171 (MEVLLGSDDG…AGMVGKLTVK (99 aa)) enclose the Plastocyanin-like domain. The Cu cation site is built by H109, C156, H159, and M164.

Belongs to the plastocyanin family. Cu(2+) serves as cofactor.

The protein localises to the plastid. It is found in the chloroplast thylakoid membrane. Functionally, participates in electron transfer between P700 and the cytochrome b6-f complex in photosystem I. Seems to be a minor plastocyanin in Arabidopsis. This is Plastocyanin minor isoform, chloroplastic (PETE) from Arabidopsis thaliana (Mouse-ear cress).